The chain runs to 3313 residues: Cadherin EGF LAG seven-pass G-type receptor 3 (3313 aa).

The first 31 residues, 1–31 (MARRPLWWGLPGPSTPLLLLLLFSLFPSSRE), serve as a signal peptide directing secretion. Topologically, residues 32–2538 (EMGGGGDQGW…RLEGDLELLA (2507 aa)) are extracellular. 2 disordered regions span residues 148–187 (LPLD…RNGR) and 205–269 (EPGH…RMRS). Residues 258–268 (HESRTAPERMR) show a composition bias toward basic and acidic residues. Cadherin domains lie at 317–424 (PQYN…APVF), 425–536 (EQAQ…APQF), 537–642 (SEKR…SPIF), 643–747 (VSTP…RPEF), 748–849 (TMKE…RPVF), 850–952 (QSAH…APQF), 953–1058 (VASH…APVF), 1059–1160 (PAEE…SPVL), and 1161–1257 (NNFQ…VVII). An N-linked (GlcNAc...) asparagine glycan is attached at Asn623. Asn838 carries N-linked (GlcNAc...) asparagine glycosylation. Residues Asn1173, Asn1213, Asn1308, and Asn1318 are each glycosylated (N-linked (GlcNAc...) asparagine). The 59-residue stretch at 1366–1424 (DDNVCLREPCENYMKCVSVLRFDSSAPFLASASTLFRPIQPIAGLRCRCPPGFTGDFCE) folds into the EGF-like 1; calcium-binding domain. 9 cysteine pairs are disulfide-bonded: Cys1370–Cys1381, Cys1375–Cys1412, Cys1414–Cys1423, Cys1430–Cys1441, Cys1435–Cys1450, Cys1452–Cys1461, Cys1470–Cys1481, Cys1475–Cys1491, and Cys1493–Cys1504. The region spanning 1426-1462 (ELDLCYSNPCRNGGACARREGGYTCVCRPRFTGEDCE) is the EGF-like 2; calcium-binding domain. The 40-residue stretch at 1466–1505 (EAGRCVPGVCRNGGTCTNAPNGGFRCQCPAGGAFEGPRCE) folds into the EGF-like 3; calcium-binding domain. Residues 1506 to 1710 (VAARSFPPSS…VANNGTTAGC (205 aa)) form the Laminin G-like 1 domain. N-linked (GlcNAc...) asparagine glycans are attached at residues Asn1640 and Asn1704. Cystine bridges form between Cys1684–Cys1710, Cys1717–Cys1728, Cys1722–Cys1737, and Cys1739–Cys1748. Residues 1713–1749 (KSHFCASGPCKNGGLCSERWGGFSCDCPVGFGGKDCR) form the EGF-like 4; calcium-binding domain. The 183-residue stretch at 1753-1935 (AHPYHFQGNG…SHRINVEPGC (183 aa)) folds into the Laminin G-like 2 domain. Asn1761 is a glycosylation site (N-linked (GlcNAc...) asparagine). Intrachain disulfides connect Cys1906/Cys1935, Cys1941/Cys1952, Cys1946/Cys1961, Cys1963/Cys1972, Cys1976/Cys1987, Cys1981/Cys1999, Cys2001/Cys2010, Cys2018/Cys2031, and Cys2033/Cys2043. In terms of domain architecture, EGF-like 5; calcium-binding spans 1937 to 1972 (VTNPCASGPCPPHANCKDLWQTFSCTCWPGYYGPGC). Asp1954 bears the (3R)-3-hydroxyaspartate mark. The EGF-like 6; calcium-binding domain maps to 1973–2011 (VDACLLNPCQNQGSCRHLQGGPHGYTCDCASGYFGQHCE). The EGF-like 7; calcium-binding domain occupies 2012–2044 (HRMDQQCPRGWWGSPTCGPCNCDVHKGFDPNCN). Asn2044 is a glycosylation site (N-linked (GlcNAc...) asparagine). The EGF-like 8; calcium-binding domain occupies 2046–2081 (TSGQCHCKEFHYRPRGSDSCLPCDCYPVGSTSRSCA). 5 disulfide bridges follow: Cys2050–Cys2065, Cys2052–Cys2068, Cys2070–Cys2080, Cys2089–Cys2098, and Cys2101–Cys2113. The Laminin EGF-like domain occupies 2068–2115 (CDCYPVGSTSRSCAPHSGQCPCRPGALGRQCNSCDSPFAEVTASGCRV). Tyr2117 bears the Phosphotyrosine mark. 5 N-linked (GlcNAc...) asparagine glycosylation sites follow: Asn2173, Asn2192, Asn2382, Asn2472, and Asn2504. Residues 2356-2395 (HTHVLLPSQSPQPSPSEVLPTSSNAENATASGVVSPPAPL) form a disordered region. One can recognise a GAIN-B domain in the interval 2364–2528 (QSPQPSPSEV…GVLMDASPRE (165 aa)). The segment covering 2374–2387 (LPTSSNAENATASG) has biased composition (polar residues). 2 cysteine pairs are disulfide-bonded: Cys2478/Cys2510 and Cys2498/Cys2512. A GPS region spans residues 2478-2528 (CVQWDPPGPADQHGMWTARDCELVHRNGSHARCRCSRTGTFGVLMDASPRE). The helical transmembrane segment at 2539 to 2559 (VFTHVVVAASVTALVLTAAVL) threads the bilayer. Over 2560–2570 (LSLRSLKSNVR) the chain is Cytoplasmic. The chain crosses the membrane as a helical span at residues 2571-2591 (GIHANVAAALGVAELLFLLGI). Residues 2592-2599 (HRTHNQLL) lie on the Extracellular side of the membrane. The helical transmembrane segment at 2600-2620 (CTVVAILLHYFFLSTFAWLLV) threads the bilayer. Topologically, residues 2621 to 2641 (QGLHLYRMQVEPRNVDRGAMR) are cytoplasmic. The helical transmembrane segment at 2642-2662 (FYHALGWGVPAVLLGLAVGLD) threads the bilayer. Topologically, residues 2663 to 2679 (PEGYGNPDFCWISIHEP) are extracellular. The helical transmembrane segment at 2680–2700 (LIWSFAGPIVLVIVMNGIMFL) threads the bilayer. Over 2701–2724 (LAARTSCSTGQREAKKTSVLRTLR) the chain is Cytoplasmic. A helical membrane pass occupies residues 2725-2745 (SSFLLLLLVSASWLFGLLAVN). The Extracellular segment spans residues 2746–2752 (HSVLAFH). The helical transmembrane segment at 2753 to 2773 (YLHAGLCGLQGLAVLLLFCVL) threads the bilayer. Residues 2774-3313 (NADARAAWTP…SEVPRSEGHS (540 aa)) are Cytoplasmic-facing. Disordered regions lie at residues 2887–2927 (AGAD…RPLR) and 2977–3004 (SNKD…RAQR). Residues 2889–2899 (ADSDSDSDLSL) show a composition bias toward acidic residues. Residues 2918 to 2927 (TRGRFQRPLR) are compositionally biased toward basic residues. At Tyr3050 the chain carries Phosphotyrosine. Disordered regions lie at residues 3091 to 3242 (APVL…PSTE) and 3255 to 3313 (NSSA…EGHS). Residue Ser3098 is modified to Phosphoserine. Residues 3102–3119 (SQERLDTAPARLEPRDRG) are compositionally biased toward basic and acidic residues. Composition is skewed to low complexity over residues 3178 to 3197 (QRPL…SLSR) and 3255 to 3289 (NSSA…PSTP). The span at 3290–3301 (RSATSHSISELS) shows a compositional bias: polar residues.

Belongs to the G-protein coupled receptor 2 family. LN-TM7 subfamily. The iron and 2-oxoglutarate dependent 3-hydroxylation of aspartate and asparagine is (R) stereospecific within EGF domains. As to expression, expressed in the brain. Expressed in cerebellum, olfactory bulb, cerebral cortex, hippocampus and brain stem.

The protein resides in the cell membrane. Its function is as follows. Receptor that may have an important role in cell/cell signaling during nervous system formation. The sequence is that of Cadherin EGF LAG seven-pass G-type receptor 3 (Celsr3) from Rattus norvegicus (Rat).